Reading from the N-terminus, the 208-residue chain is Small ribosomal subunit protein eS8 (208 aa).

Residues 1–40 (MGISRDNWHKRRKTGGKRKPVHKKRKYELGRPPSNTKLGP) are disordered. A compositionally biased stretch (basic residues) spans 8–26 (WHKRRKTGGKRKPVHKKRK).

It belongs to the eukaryotic ribosomal protein eS8 family. In terms of assembly, component of the small ribosomal subunit.

The protein localises to the cytoplasm. Component of the small ribosomal subunit. The ribosome is a large ribonucleoprotein complex responsible for the synthesis of proteins in the cell. This Ictalurus punctatus (Channel catfish) protein is Small ribosomal subunit protein eS8 (rps8).